An 802-amino-acid polypeptide reads, in one-letter code: Elongation factor G, mitochondrial (802 aa).

The transit peptide at 1–24 directs the protein to the mitochondrion; it reads MRYPSLARLPRRALSGLARAPVRL. The tr-type G domain maps to 100-387; that stretch reads SRVRNIGIAA…GVIDYLPNPS (288 aa). GTP is bound by residues 109-116, 185-189, and 239-242; these read AHIDSGKT, DTPGH, and NKMD.

This sequence belongs to the TRAFAC class translation factor GTPase superfamily. Classic translation factor GTPase family. EF-G/EF-2 subfamily.

The protein resides in the mitochondrion. Its pathway is protein biosynthesis; polypeptide chain elongation. In terms of biological role, mitochondrial GTPase that catalyzes the GTP-dependent ribosomal translocation step during translation elongation. During this step, the ribosome changes from the pre-translocational (PRE) to the post-translocational (POST) state as the newly formed A-site-bound peptidyl-tRNA and P-site-bound deacylated tRNA move to the P and E sites, respectively. Catalyzes the coordinated movement of the two tRNA molecules, the mRNA and conformational changes in the ribosome. The chain is Elongation factor G, mitochondrial (mef1) from Aspergillus terreus (strain NIH 2624 / FGSC A1156).